The following is a 45-amino-acid chain: Photosystem II reaction center protein K (45 aa).

The propeptide occupies 1–8 (MNSALFLA). Residues 23 to 43 (ILPVIPVFFLLLAFVWQAAIG) form a helical membrane-spanning segment.

The protein belongs to the PsbK family. In terms of assembly, PSII is composed of 1 copy each of membrane proteins PsbA, PsbB, PsbC, PsbD, PsbE, PsbF, PsbH, PsbI, PsbJ, PsbK, PsbL, PsbM, PsbT, PsbX, PsbY, PsbZ, Psb30/Ycf12, at least 3 peripheral proteins of the oxygen-evolving complex and a large number of cofactors. It forms dimeric complexes.

It localises to the plastid. The protein localises to the chloroplast thylakoid membrane. Functionally, one of the components of the core complex of photosystem II (PSII). PSII is a light-driven water:plastoquinone oxidoreductase that uses light energy to abstract electrons from H(2)O, generating O(2) and a proton gradient subsequently used for ATP formation. It consists of a core antenna complex that captures photons, and an electron transfer chain that converts photonic excitation into a charge separation. The protein is Photosystem II reaction center protein K of Porphyra purpurea (Red seaweed).